The sequence spans 278 residues: UPF0761 membrane protein NT05HA_1801 (278 aa).

A run of 6 helical transmembrane segments spans residues 32–52 (MLAIVPLIMVVFSIFSAFPVF), 88–108 (QMSAVGIISLIVVALMLINSI), 123–143 (PIFTSFAIYWLILTLGPLLVG), 168–188 (LLSFVPFLSTWFIFTVIYMVV), 203–223 (LIAAVFFTLGKQAFAWYIVTF), and 232–252 (AMATLPIMLLWIQLSWTFVLL).

Belongs to the UPF0761 family.

Its subcellular location is the cell inner membrane. The sequence is that of UPF0761 membrane protein NT05HA_1801 from Aggregatibacter aphrophilus (strain NJ8700) (Haemophilus aphrophilus).